We begin with the raw amino-acid sequence, 433 residues long: Serine/threonine-protein kinase STK11 (433 aa).

S31 is subject to Phosphoserine. An N6-acetyllysine mark is found at K44 and K48. The interval 45–90 (LIGKYLMGDLLGEGSYGKVKEVLDSETLCRRAVKILKKKKLRRIPN) is sufficient for interaction with SIRT1. Positions 49–309 (YLMGDLLGEG…IRQIRQHSWF (261 aa)) constitute a Protein kinase domain. ATP contacts are provided by residues 55–63 (LGEGSYGKV) and K78. N6-acetyllysine is present on residues K96 and K97. The Proton acceptor role is filled by D176. T189 carries the post-translational modification Phosphothreonine; by autocatalysis. An N6-acetyllysine mark is found at K296 and K311. Residues 312 to 331 (KHPPAEAPVPIPPSPDTKDR) form a disordered region. Pro residues predominate over residues 316–326 (AEAPVPIPPSP). The residue at position 325 (S325) is a Phosphoserine. T336 bears the Phosphothreonine; by autocatalysis mark. T363 is subject to Phosphothreonine; by ATM and autocatalysis. The interval 397–433 (AAQLSTKSRAEGRAPNPARKACSASSKIRRLSACKQQ) is disordered. Phosphoserine is present on residues Q399 and S401. At K416 the chain carries N6-acetyllysine. C418 carries the S-palmitoyl cysteine lipid modification. K423 carries the post-translational modification N6-acetyllysine. The segment covering 423–433 (KIRRLSACKQQ) has biased composition (basic residues). Phosphoserine; by autocatalysis, PKA, PKC/PRKCZ and RPS6KA1 is present on S428. C430 carries the post-translational modification Cysteine methyl ester. The S-farnesyl cysteine moiety is linked to residue C430. K431 is modified (N6-acetyllysine). The propeptide at 431–433 (KQQ) is removed in mature form.

The protein belongs to the protein kinase superfamily. CAMK Ser/Thr protein kinase family. LKB1 subfamily. Catalytic component of a trimeric complex composed of STK11/LKB1, STRAD (STRADA or STRADB) and CAB39/MO25 (CAB39/MO25alpha or CAB39L/MO25beta): the complex tethers STK11/LKB1 in the cytoplasm and stimulates its catalytic activity. Found in a ternary complex composed of SMAD4, STK11/LKB1 and STK11IP. Interacts with p53/TP53, SMAD4, STK11IP and WDR6. Interacts with NR4A1. Interacts with NISCH; this interaction may increase STK11 activity. Interacts with PTEN; leading to PTEN phosphorylation. Interacts with SIRT1; the interaction deacetylates STK11. Interacts with CDKN1A. The cofactor is Mg(2+). Requires Mn(2+) as cofactor. In terms of processing, phosphorylated by ATM at Thr-363 following ionizing radiation (IR). Phosphorylation at Ser-428 by RPS6KA1 and/or some PKA is required to inhibit cell growth. Phosphorylation at Ser-428 is also required during neuronal polarization to mediate phosphorylation of BRSK1 and BRSK2. Phosphorylation by PKC/PRKCZ at Ser-399 in isoform 2 promotes metformin (or peroxynitrite)-induced nuclear export of STK11 and activation of AMPK. UV radiation-induced phosphorylation at Thr-363 mediates CDKN1A degradation. Post-translationally, acetylated. Deacetylation at Lys-48 enhances cytoplasmic localization and kinase activity in vitro. As to expression, ubiquitously expressed. Strongest expression in testis and fetal liver.

It localises to the nucleus. The protein resides in the cytoplasm. It is found in the membrane. The protein localises to the mitochondrion. It catalyses the reaction L-seryl-[protein] + ATP = O-phospho-L-seryl-[protein] + ADP + H(+). The catalysed reaction is L-threonyl-[protein] + ATP = O-phospho-L-threonyl-[protein] + ADP + H(+). With respect to regulation, activated by forming a complex with STRAD (STRADA or STRADB) and CAB39/MO25 (CAB39/MO25alpha or CAB39L/MO25beta): STRADA (or STRADB)-binding promotes a conformational change of STK11/LKB1 in an active conformation, which is stabilized by CAB39/MO25alpha (or CAB39L/MO25beta) interacting with the STK11/LKB1 activation loop. Sequestration in the nucleus by NR4A1 prevents it from phosphorylating and activating cytoplasmic AMPK. Its function is as follows. Tumor suppressor serine/threonine-protein kinase that controls the activity of AMP-activated protein kinase (AMPK) family members, thereby playing a role in various processes such as cell metabolism, cell polarity, apoptosis and DNA damage response. Acts by phosphorylating the T-loop of AMPK family proteins, thus promoting their activity: phosphorylates PRKAA1, PRKAA2, BRSK1, BRSK2, MARK1, MARK2, MARK3, MARK4, NUAK1, NUAK2, SIK1, SIK2, SIK3 and SNRK but not MELK. Also phosphorylates non-AMPK family proteins such as STRADA, PTEN and possibly p53/TP53. Acts as a key upstream regulator of AMPK by mediating phosphorylation and activation of AMPK catalytic subunits PRKAA1 and PRKAA2 and thereby regulates processes including: inhibition of signaling pathways that promote cell growth and proliferation when energy levels are low, glucose homeostasis in liver, activation of autophagy when cells undergo nutrient deprivation, and B-cell differentiation in the germinal center in response to DNA damage. Also acts as a regulator of cellular polarity by remodeling the actin cytoskeleton. Required for cortical neuron polarization by mediating phosphorylation and activation of BRSK1 and BRSK2, leading to axon initiation and specification. Involved in DNA damage response: interacts with p53/TP53 and recruited to the CDKN1A/WAF1 promoter to participate in transcription activation. Able to phosphorylate p53/TP53; the relevance of such result in vivo is however unclear and phosphorylation may be indirect and mediated by downstream STK11/LKB1 kinase NUAK1. Also acts as a mediator of p53/TP53-dependent apoptosis via interaction with p53/TP53: translocates to the mitochondrion during apoptosis and regulates p53/TP53-dependent apoptosis pathways. Regulates UV radiation-induced DNA damage response mediated by CDKN1A. In association with NUAK1, phosphorylates CDKN1A in response to UV radiation and contributes to its degradation which is necessary for optimal DNA repair. Has a role in spermiogenesis. This chain is Serine/threonine-protein kinase STK11, found in Homo sapiens (Human).